The sequence spans 743 residues: Cytosolic neutral trehalase (743 aa).

The Ca(2+) site is built by Asp-95, Asp-97, Asn-99, Gln-101, and Asp-106. Residues Arg-285, 292–293 (WD), Asn-329, 338–340 (RSQ), Glu-405, Arg-454, and Gly-457 each bind substrate. Catalysis depends on proton donor/acceptor residues Asp-459 and Glu-664.

Belongs to the glycosyl hydrolase 37 family. The cofactor is Ca(2+).

It is found in the cytoplasm. The enzyme catalyses alpha,alpha-trehalose + H2O = alpha-D-glucose + beta-D-glucose. It participates in carbohydrate degradation. In terms of biological role, hydrolyzes intracellular trehalose to glucose. In Beauveria bassiana (strain ARSEF 2860) (White muscardine disease fungus), this protein is Cytosolic neutral trehalase.